The following is a 139-amino-acid chain: MEKNSSSPKIRALAKHIRMSTHRARRVIDQVRNRSYEQALMILELMPYRACYPILQLISSAAANANHNIGLNKANLFVSRAEVNEGAILKRSQPRAQGRGYPIQKPTCHITIVLEERSRSNNLIMPTEPKKGKYVWDRK.

This sequence belongs to the universal ribosomal protein uL22 family. In terms of assembly, part of the 50S ribosomal subunit.

The protein resides in the plastid. It localises to the chloroplast. This protein binds specifically to 23S rRNA. Its function is as follows. The globular domain of the protein is located near the polypeptide exit tunnel on the outside of the subunit, while an extended beta-hairpin is found that lines the wall of the exit tunnel in the center of the 70S ribosome. The sequence is that of Large ribosomal subunit protein uL22c (rpl22) from Cycas taitungensis (Prince sago).